The sequence spans 344 residues: Nicotinate-nucleotide--dimethylbenzimidazole phosphoribosyltransferase (344 aa).

E310 serves as the catalytic Proton acceptor.

This sequence belongs to the CobT family.

The catalysed reaction is 5,6-dimethylbenzimidazole + nicotinate beta-D-ribonucleotide = alpha-ribazole 5'-phosphate + nicotinate + H(+). The protein operates within nucleoside biosynthesis; alpha-ribazole biosynthesis; alpha-ribazole from 5,6-dimethylbenzimidazole: step 1/2. Functionally, catalyzes the synthesis of alpha-ribazole-5'-phosphate from nicotinate mononucleotide (NAMN) and 5,6-dimethylbenzimidazole (DMB). The chain is Nicotinate-nucleotide--dimethylbenzimidazole phosphoribosyltransferase from Shewanella amazonensis (strain ATCC BAA-1098 / SB2B).